The sequence spans 199 residues: uncharacterized protein (199 aa).

The G-patch domain maps to 112–160 (PKSLGYRVLSQYGWSPQGDTAGLGLENQGRRAPVRAFRVKNDTIGLGTK).

This is an uncharacterized protein from Schizosaccharomyces pombe (strain 972 / ATCC 24843) (Fission yeast).